The following is a 100-amino-acid chain: Large ribosomal subunit protein uL23 (100 aa).

This sequence belongs to the universal ribosomal protein uL23 family. In terms of assembly, part of the 50S ribosomal subunit. Contacts protein L29, and trigger factor when it is bound to the ribosome.

One of the early assembly proteins it binds 23S rRNA. One of the proteins that surrounds the polypeptide exit tunnel on the outside of the ribosome. Forms the main docking site for trigger factor binding to the ribosome. The sequence is that of Large ribosomal subunit protein uL23 from Synechococcus sp. (strain WH7803).